The sequence spans 321 residues: Citrate synthase (321 aa).

Catalysis depends on residues histidine 248 and aspartate 306.

The protein belongs to the citrate synthase family.

It carries out the reaction oxaloacetate + acetyl-CoA + H2O = citrate + CoA + H(+). It functions in the pathway carbohydrate metabolism; tricarboxylic acid cycle; isocitrate from oxaloacetate: step 1/2. The chain is Citrate synthase (gltA) from Bartonella elizabethae (Rochalimaea elizabethae).